Reading from the N-terminus, the 66-residue chain is uncharacterized protein (66 aa).

Residues 1 to 25 (MIVIILLFISIIVFLSVIQPQPSKN) form the signal peptide. Residues 21–31 (QPSKNKSRQQA) are compositionally biased toward polar residues. The disordered stretch occupies residues 21–66 (QPSKNKSRQQADSGYFGYSDHSSHHDGCSSDGGFSDSGCGGGGGGD).

This is an uncharacterized protein from Bacillus subtilis (strain 168).